The primary structure comprises 336 residues: MKSAKKLLSVLCLGIFILTFTACDMVEKTPEAKAKSTIAKVNGEKIQRKDLDESPSMQQVLSQIKTQYGEEFEKTEQGKEVIKEQKKQILENLITEKVLLQKGKELKVIPKDEELNKEADKKVNEIKAVYNNDEKKFEETLKSTGFTKETLKEYLKDQIVIEKVINEVTKDVKVEDKDAQKYYNENQSMFTEKPNTMNVSHILVKTEDEAKKVKKRLDAKEDFAKVAKEVSQDTGSKDKGGLLGDISYSDSNFDPTFMKAAIALKSGAISNPVHTQFGYHIIKINSKKEYPVKKFDSVKEDIKKQLKQEKQQEAYTKKIEEWKKASKIKTYEKNLL.

The N-terminal stretch at 1 to 22 is a signal peptide; the sequence is MKSAKKLLSVLCLGIFILTFTA. Residue Cys23 is the site of N-palmitoyl cysteine attachment. Cys23 carries S-diacylglycerol cysteine lipidation. Positions 194–286 constitute a PpiC domain; sequence PNTMNVSHIL…FGYHIIKINS (93 aa).

The protein belongs to the PrsA family.

The protein resides in the cell membrane. It carries out the reaction [protein]-peptidylproline (omega=180) = [protein]-peptidylproline (omega=0). Its function is as follows. Plays a major role in protein secretion by helping the post-translocational extracellular folding of several secreted proteins. This is Foldase protein PrsA from Clostridium botulinum (strain Kyoto / Type A2).